A 590-amino-acid chain; its full sequence is Phosphate-repressible phosphate permease pho-4 (590 aa).

8 helical membrane passes run 6-26, 44-64, 85-105, 118-138, 149-169, 186-206, 220-240, and 246-266; these read FDYLLAIGTIFAALDAWNIGA, YLQAMILGSIMEFAGSVGVGA, ALLMLGMVCAVVASSIYLTMA, IMGGVIGMGIAAVGADGVQWV, VFLAWVIAPGLAGAFASIIFL, FVMVPIYFGITAALLCMLLLW, IAGTIIGVGAAWALLVTIFLM, and IVILEDWQLRFWHIPLGPLLL. Residues 267–466 lie on the Cytoplasmic side of the membrane; that stretch reads RRGEVPPPPA…GALPEKGKAD (200 aa). Positions 297-361 are disordered; the sequence is ARRAAQNGDS…PQIKTMVGPR (65 aa). Polar residues predominate over residues 313–322; sequence VTSSTSNPSA. The span at 325 to 345 shows a compositional bias: basic and acidic residues; sequence DGEKGATITKDDSSYSHDHSE. 4 consecutive transmembrane segments (helical) span residues 467–487, 506–525, 527–547, and 561–581; these read VPVWILVFGASCLVIGLWTYG, GFSMELGSAVTVILATRLKL, VSTTQCITGATVGVGLCSGTW, and GWFITLPVAGIISGCLMGIII.

Belongs to the inorganic phosphate transporter (PiT) (TC 2.A.20) family.

The protein resides in the cell membrane. With respect to regulation, phosphate transport activity is competitively inhibited by vanadate and arsenate. High-affinity transporter for external inorganic phosphate. Acts probably as a sodium-phosphate symporter. Component of the high affinity phosphate transport system II (ptsII) necessary for scavenging phosphorus from the environment under conditions of limiting phosphorus. This Neurospora crassa (strain ATCC 24698 / 74-OR23-1A / CBS 708.71 / DSM 1257 / FGSC 987) protein is Phosphate-repressible phosphate permease pho-4.